A 666-amino-acid polypeptide reads, in one-letter code: tRNA 5-methylaminomethyl-2-thiouridine biosynthesis bifunctional protein MnmC (666 aa).

Positions 1–253 (MSSPFAPIIT…KRHMLCAYYE (253 aa)) are tRNA (mnm(5)s(2)U34)-methyltransferase. An FAD-dependent cmnm(5)s(2)U34 oxidoreductase region spans residues 283-666 (VGGGLAGCFI…FLRKKIIQGP (384 aa)).

It in the N-terminal section; belongs to the methyltransferase superfamily. tRNA (mnm(5)s(2)U34)-methyltransferase family. In the C-terminal section; belongs to the DAO family. FAD serves as cofactor.

The protein resides in the cytoplasm. It carries out the reaction 5-aminomethyl-2-thiouridine(34) in tRNA + S-adenosyl-L-methionine = 5-methylaminomethyl-2-thiouridine(34) in tRNA + S-adenosyl-L-homocysteine + H(+). Its function is as follows. Catalyzes the last two steps in the biosynthesis of 5-methylaminomethyl-2-thiouridine (mnm(5)s(2)U) at the wobble position (U34) in tRNA. Catalyzes the FAD-dependent demodification of cmnm(5)s(2)U34 to nm(5)s(2)U34, followed by the transfer of a methyl group from S-adenosyl-L-methionine to nm(5)s(2)U34, to form mnm(5)s(2)U34. The protein is tRNA 5-methylaminomethyl-2-thiouridine biosynthesis bifunctional protein MnmC of Legionella pneumophila (strain Corby).